A 129-amino-acid polypeptide reads, in one-letter code: Small ribosomal subunit protein uS11 (129 aa).

It belongs to the universal ribosomal protein uS11 family. Part of the 30S ribosomal subunit. Interacts with proteins S7 and S18. Binds to IF-3.

In terms of biological role, located on the platform of the 30S subunit, it bridges several disparate RNA helices of the 16S rRNA. Forms part of the Shine-Dalgarno cleft in the 70S ribosome. The polypeptide is Small ribosomal subunit protein uS11 (Desulforamulus reducens (strain ATCC BAA-1160 / DSM 100696 / MI-1) (Desulfotomaculum reducens)).